Here is a 315-residue protein sequence, read N- to C-terminus: GPN-loop GTPase 2 (315 aa).

12–17 lines the GTP pocket; the sequence is GSGKST. The Gly-Pro-Asn (GPN)-loop; involved in dimer interface signature appears at 69–71; that stretch reads GPN. 172-175 is a binding site for GTP; sequence SKAD.

Belongs to the GPN-loop GTPase family. In terms of assembly, heterodimers with gpn1 or fet5/gpn3. Binds to RNA polymerase II (RNAPII).

It is found in the cytoplasm. Its subcellular location is the nucleus. Small GTPase required for proper nuclear import of RNA polymerase II and III (RNAPII and RNAPIII). May act at an RNAP assembly step prior to nuclear import. The chain is GPN-loop GTPase 2 from Schizosaccharomyces pombe (strain 972 / ATCC 24843) (Fission yeast).